Reading from the N-terminus, the 270-residue chain is uncharacterized protein (270 aa).

The signal sequence occupies residues 1 to 22 (MEYIKKLLCTMSVLLLIIFIGG). The N-palmitoyl cysteine moiety is linked to residue Cys23. The S-diacylglycerol cysteine moiety is linked to residue Cys23.

It belongs to the staphylococcal tandem lipoprotein family.

The protein resides in the cell membrane. This is an uncharacterized protein from Staphylococcus aureus (strain bovine RF122 / ET3-1).